The primary structure comprises 364 residues: Selection and upkeep of intraepithelial T-cells protein 11 (364 aa).

An N-terminal signal peptide occupies residues 1 to 28; it reads MEPSASCLPGFFMVCILLKITVLTQVMS. Residues 29–118 form the Ig-like V-type domain; sequence LDIQINTQIP…TNQEKRRSII (90 aa). At 29 to 138 the chain is on the extracellular side; the sequence is LDIQINTQIP…MSLMSNNLLY (110 aa). Cys48 and Cys102 are oxidised to a cystine. A helical transmembrane segment spans residues 139–159; sequence LGIYLIFILFLNFLKGILFCL. The Cytoplasmic segment spans residues 160–186; sequence TKRLVHFRKRMIKIKKVWSNKTRACCP. The helical transmembrane segment at 187–207 threads the bilayer; it reads LIWEFLEIVLFIAFLPLYLMF. Over 208 to 230 the chain is Extracellular; it reads RIRVFTLDEAHILYNNWLWKVCK. Residues 231-251 traverse the membrane as a helical segment; that stretch reads TLIAMMILFTVLILFLLWTLN. The Cytoplasmic portion of the chain corresponds to 252–364; it reads RYGKMPCLSS…LYSKLGNLTH (113 aa).

Belongs to the SKINT family. As to expression, expressed in skin and thymus.

It localises to the membrane. In terms of biological role, may act by engaging a cell surface molecule on immature T-cells in the embryonic thymus. The sequence is that of Selection and upkeep of intraepithelial T-cells protein 11 (Skint11) from Mus musculus (Mouse).